The chain runs to 225 residues: Heptaprenylglyceryl phosphate synthase (225 aa).

Residue lysine 6 coordinates sn-glycerol 1-phosphate. Positions 8 and 34 each coordinate Mg(2+). Sn-glycerol 1-phosphate contacts are provided by residues 153–158, glycine 183, and 203–204; these read YVEYSG and GN.

The protein belongs to the GGGP/HepGP synthase family. Group I subfamily. In terms of assembly, homodimer. Mg(2+) is required as a cofactor.

It catalyses the reaction sn-glycerol 1-phosphate + all-trans-heptaprenyl diphosphate = 3-heptaprenyl-sn-glycero-1-phosphate + diphosphate. It participates in membrane lipid metabolism; glycerophospholipid metabolism. Functionally, prenyltransferase that catalyzes in vivo the transfer of the heptaprenyl moiety of heptaprenyl pyrophosphate (HepPP; 35 carbon atoms) to the C3 hydroxyl of sn-glycerol-1-phosphate (G1P), producing heptaprenylglyceryl phosphate (HepGP). This reaction is an ether-bond-formation step in the biosynthesis of archaea-type G1P-based membrane lipids found in Bacillales. The sequence is that of Heptaprenylglyceryl phosphate synthase from Listeria monocytogenes serotype 4b (strain F2365).